The primary structure comprises 269 residues: Interleukin-1 beta (269 aa).

Positions 1-112 are excised as a propeptide; it reads MAMVPEITCD…EEPITFKNCD (112 aa).

Belongs to the IL-1 family. In terms of assembly, monomer. In its precursor form, weakly interacts with full-length MEFV; the mature cytokine does not interact at all. Interacts with integrins ITGAV:ITGBV and ITGA5:ITGB1; integrin-binding is required for IL1B signaling. Interacts with cargo receptor TMED10; the interaction is direct and is required for the secretion of IL1B mature form. Interacts with HSP90AB1; the interaction facilitates cargo translocation into the ERGIC. Interacts with HSP90B1; the interaction facilitates cargo translocation into the ERGIC.

The protein resides in the cytoplasm. The protein localises to the cytosol. It localises to the secreted. It is found in the lysosome. Its subcellular location is the extracellular exosome. Its function is as follows. Potent pro-inflammatory cytokine. Initially discovered as the major endogenous pyrogen, induces prostaglandin synthesis, neutrophil influx and activation, T-cell activation and cytokine production, B-cell activation and antibody production, and fibroblast proliferation and collagen production. Promotes Th17 differentiation of T-cells. Synergizes with IL12/interleukin-12 to induce IFNG synthesis from T-helper 1 (Th1) cells. Plays a role in angiogenesis by inducing VEGF production synergistically with TNF and IL6. Involved in transduction of inflammation downstream of pyroptosis: its mature form is specifically released in the extracellular milieu by passing through the gasdermin-D (GSDMD) pore. The chain is Interleukin-1 beta (IL1B) from Trichosurus vulpecula (Brush-tailed possum).